Here is a 608-residue protein sequence, read N- to C-terminus: Aspartate--tRNA(Asp/Asn) ligase (608 aa).

L-aspartate is bound at residue Glu-175. The aspartate stretch occupies residues 199–202 (QLFK). Arg-221 is a binding site for L-aspartate. ATP contacts are provided by residues 221–223 (RDE) and Gln-230. L-aspartate is bound at residue His-453. ATP is bound at residue Glu-487. Arg-494 serves as a coordination point for L-aspartate. 539–542 (GWDR) serves as a coordination point for ATP. Residues 566 to 608 (IDPLTDAPAAITPQQRKEAGIDAKPKPKAEAQAEAQAEESAEK) are disordered. The segment covering 580 to 596 (QRKEAGIDAKPKPKAEA) has biased composition (basic and acidic residues).

The protein belongs to the class-II aminoacyl-tRNA synthetase family. Type 1 subfamily. Homodimer.

The protein resides in the cytoplasm. It carries out the reaction tRNA(Asx) + L-aspartate + ATP = L-aspartyl-tRNA(Asx) + AMP + diphosphate. Its function is as follows. Aspartyl-tRNA synthetase with relaxed tRNA specificity since it is able to aspartylate not only its cognate tRNA(Asp) but also tRNA(Asn). Reaction proceeds in two steps: L-aspartate is first activated by ATP to form Asp-AMP and then transferred to the acceptor end of tRNA(Asp/Asn). The polypeptide is Aspartate--tRNA(Asp/Asn) ligase (Corynebacterium glutamicum (strain R)).